The following is a 128-amino-acid chain: Fluoride-specific ion channel FluC (128 aa).

The next 4 membrane-spanning stretches (helical) occupy residues 7–29 (LNFI…LGLR), 36–57 (PWGT…VALI), 65–94 (AWIR…DMLE), and 98–126 (YATA…VRLL). Position 43 (Asn43) interacts with fluoride. The Na(+) site is built by Gly77 and Thr80. 3 residues coordinate fluoride: Tyr104, Ser108, and Ser112.

The protein belongs to the fluoride channel Fluc/FEX (TC 1.A.43) family. Homodimer.

The protein resides in the cell inner membrane. It carries out the reaction fluoride(in) = fluoride(out). Its activity is regulated as follows. Na(+) is not transported, but it plays an essential structural role and its presence is essential for fluoride channel function. The Na(+)-binding site is specific for Na(+) over most other cations including K(+) and Mg(2+). Fluoride efflux is inhibited by Li(2+). In terms of biological role, fluoride-specific ion channel. Important for reducing fluoride concentration in the cell, thus reducing its toxicity. Is highly specific for fluoride ions and cannot transport chloride ions. This Bordetella pertussis (strain Tohama I / ATCC BAA-589 / NCTC 13251) protein is Fluoride-specific ion channel FluC.